Reading from the N-terminus, the 294-residue chain is 4-hydroxy-tetrahydrodipicolinate synthase (294 aa).

Threonine 47 contributes to the pyruvate binding site. Tyrosine 135 serves as the catalytic Proton donor/acceptor. The active-site Schiff-base intermediate with substrate is the lysine 163. Valine 205 contributes to the pyruvate binding site.

The protein belongs to the DapA family. As to quaternary structure, homotetramer; dimer of dimers.

It is found in the cytoplasm. It carries out the reaction L-aspartate 4-semialdehyde + pyruvate = (2S,4S)-4-hydroxy-2,3,4,5-tetrahydrodipicolinate + H2O + H(+). Its pathway is amino-acid biosynthesis; L-lysine biosynthesis via DAP pathway; (S)-tetrahydrodipicolinate from L-aspartate: step 3/4. In terms of biological role, catalyzes the condensation of (S)-aspartate-beta-semialdehyde [(S)-ASA] and pyruvate to 4-hydroxy-tetrahydrodipicolinate (HTPA). This is 4-hydroxy-tetrahydrodipicolinate synthase from Rickettsia bellii (strain OSU 85-389).